Here is a 315-residue protein sequence, read N- to C-terminus: ATP synthase gamma chain (315 aa).

It belongs to the ATPase gamma chain family. In terms of assembly, F-type ATPases have 2 components, CF(1) - the catalytic core - and CF(0) - the membrane proton channel. CF(1) has five subunits: alpha(3), beta(3), gamma(1), delta(1), epsilon(1). CF(0) has three main subunits: a, b and c.

The protein localises to the cell membrane. Its function is as follows. Produces ATP from ADP in the presence of a proton gradient across the membrane. The gamma chain is believed to be important in regulating ATPase activity and the flow of protons through the CF(0) complex. This is ATP synthase gamma chain from Latilactobacillus sakei subsp. sakei (strain 23K) (Lactobacillus sakei subsp. sakei).